Consider the following 377-residue polypeptide: 26S proteasome non-ATPase regulatory subunit 4 (377 aa).

Residues 5–188 enclose the VWFA domain; that stretch reads STMVCVDNSE…LADALISSPI (184 aa). Residue K122 forms a Glycyl lysine isopeptide (Lys-Gly) (interchain with G-Cter in SUMO2) linkage. Residues 197 to 262 form an interaction with UBQLN1 region; that stretch reads LGLGASDFEF…TEDSDDALLK (66 aa). Residues 211–230 form the UIM 1 domain; the sequence is SADPELALALRVSMEEQRQR. Positions 216–220 are essential for ubiquitin-binding; that stretch reads LALAL. Positions 224-237 are enriched in basic and acidic residues; that stretch reads MEEQRQRQEEEARR. Residues 224-255 are disordered; the sequence is MEEQRQRQEEEARRAAAASAAEAGIATTGTED. A phosphothreonine mark is found at T250 and T253. Phosphoserine occurs at positions 256 and 266. The 20-residue stretch at 282–301 folds into the UIM 2 domain; sequence TEEEQIAYAMQMSLQGAEFG. The essential for ubiquitin-binding stretch occupies residues 287–291; it reads IAYAM. Disordered regions lie at residues 300–327 and 341–377; these read FGQA…DDYD and NLPG…EDKK. A phosphoserine mark is found at S358 and S361. The segment covering 365–377 has biased composition (basic and acidic residues); the sequence is KDGKKDKKEEDKK.

It belongs to the proteasome subunit S5A family. In terms of assembly, component of the 19S proteasome regulatory particle complex. The 26S proteasome consists of a 20S core particle (CP) and two 19S regulatory subunits (RP). The regulatory particle is made of a lid composed of 9 subunits, a base containing 6 ATPases and few additional components including PSMD4. Interacts with NUB1. Interacts with SQSTM1. Interacts with UBQLN4. Interacts with UBE3A. Interacts with UBQLN1 (via ubiquitin-like domain). Interacts with DDI2.

Functionally, component of the 26S proteasome, a multiprotein complex involved in the ATP-dependent degradation of ubiquitinated proteins. This complex plays a key role in the maintenance of protein homeostasis by removing misfolded or damaged proteins, which could impair cellular functions, and by removing proteins whose functions are no longer required. Therefore, the proteasome participates in numerous cellular processes, including cell cycle progression, apoptosis, or DNA damage repair. PSMD4 acts as an ubiquitin receptor subunit through ubiquitin-interacting motifs and selects ubiquitin-conjugates for destruction. Displays a preferred selectivity for longer polyubiquitin chains. The protein is 26S proteasome non-ATPase regulatory subunit 4 (PSMD4) of Homo sapiens (Human).